The chain runs to 248 residues: tRNA (guanine-N(1)-)-methyltransferase (248 aa).

Residues G113 and 133–138 (IGDYVL) contribute to the S-adenosyl-L-methionine site.

The protein belongs to the RNA methyltransferase TrmD family. As to quaternary structure, homodimer.

The protein localises to the cytoplasm. It catalyses the reaction guanosine(37) in tRNA + S-adenosyl-L-methionine = N(1)-methylguanosine(37) in tRNA + S-adenosyl-L-homocysteine + H(+). Functionally, specifically methylates guanosine-37 in various tRNAs. The chain is tRNA (guanine-N(1)-)-methyltransferase from Shewanella frigidimarina (strain NCIMB 400).